The chain runs to 85 residues: Small integral membrane protein 2 (85 aa).

The helical transmembrane segment at 21–43 threads the bilayer; it reads GHAISILFGFWTSFICDTYIVLA. Residues 51-85 form a disordered region; sequence SPDVSASSDEPYARIQQSRRQCHAEEDQSQVPEAG.

It is found in the membrane. This is Small integral membrane protein 2 (SMIM2) from Homo sapiens (Human).